The following is a 1214-amino-acid chain: Filamin-A-interacting protein 1 (1214 aa).

The span at 1-15 (MRSRNQGGESSSNGH) shows a compositional bias: polar residues. Residues 1–73 (MRSRNQGGES…ESEKKTKKPL (73 aa)) form a disordered region. 2 stretches are compositionally biased toward basic and acidic residues: residues 32–47 (PSED…KGED) and 61–73 (PSGE…KKPL). Position 138 is a phosphoserine (Ser-138). Coiled-coil stretches lie at residues 192–581 (DYMN…KLRS) and 624–778 (PEDN…ELEL). 2 disordered regions span residues 875–898 (KREN…GHPG) and 949–976 (KPRI…GPER). Phosphoserine is present on Ser-979. A disordered region spans residues 1104 to 1192 (VSTGTVLRSP…TKFQPRAETQ (89 aa)). Residues 1126–1140 (VTSTITITPVTTSST) are compositionally biased toward low complexity. Polar residues predominate over residues 1141–1157 (RGTQSVSGQDGSSQRPT). The span at 1169-1180 (AGKPVVAAPGAG) shows a compositional bias: low complexity.

This sequence belongs to the FILIP1 family. Interacts with FLNA. Interacts with RHOD (in GTP-bound form).

It is found in the cytoplasm. Its subcellular location is the cytoskeleton. Functionally, by acting through a filamin-A/F-actin axis, it controls the start of neocortical cell migration from the ventricular zone. May be able to induce the degradation of filamin-A. This is Filamin-A-interacting protein 1 (Filip1) from Mus musculus (Mouse).